A 377-amino-acid chain; its full sequence is Short chain dehydrogenase gsfE (377 aa).

Residues Asp-89, Gln-121, Tyr-226, Ala-266, and Ser-268 each contribute to the NADP(+) site. Catalysis depends on Tyr-226, which acts as the Proton donor.

The protein belongs to the short-chain dehydrogenases/reductases (SDR) family. Highly divergent.

It carries out the reaction dehydrogriseofulvin + NADPH + H(+) = griseofulvin + NADP(+). The protein operates within secondary metabolite biosynthesis; terpenoid biosynthesis. Functionally, short chain dehydrogenase; part of the gene cluster that mediates the biosynthesis of griseofulvin, an important antifungal drug that has been in use for a long time for treating dermatophyte infections. The first step of the pathway is the formation of the heptaketide backbone by gsfA which is initiated by priming with acetyl-CoA, followed by sequential condensations of 6 malonyl-CoA units. The resulting benzophenone can undergo a spontaneous dehydration to form norlichexanthone. However, the true precursor for the griseofulvin biosynthesis is not norlichexanthone, but the heptaketide benzophenone that is O-methylated at 3-OH by gsfB to produce griseophenone D which is further methylated at 9-OH by gsfC to yield griseophenone C. Griseophenone C is then substrate of halogenase gsfI which is responsible for the regio-specific chlorination at the C13 position to form griseophenone B. The cytochrome P450 gsfF catalyzes the coupling of orcinol and phloroglucinol rings in griseophenone B to form desmethyl-dehydrogriseofulvin A which is further methylated at 5-OH by gsfD to yield dehydrogriseofulvin. Finally, gsfE performs stereospecific reduction of enone 18 of dehydrogriseofulvin to afford the final product griseofulvin. This is Short chain dehydrogenase gsfE from Penicillium aethiopicum.